A 140-amino-acid polypeptide reads, in one-letter code: Chorion class A protein Ld2/Ld41 (140 aa).

Positions methionine 1–serine 21 are cleaved as a signal peptide.

Belongs to the chorion protein family.

In terms of biological role, this protein is one of many from the eggshell of the gypsy moth. The polypeptide is Chorion class A protein Ld2/Ld41 (Lymantria dispar (Gypsy moth)).